The primary structure comprises 392 residues: Galactokinase (392 aa).

The alpha-D-galactose site is built by Arg37, Glu43, His44, and Asp46. Residues Gly136, Gly138, Ser140, and Ser141 each coordinate ATP. Asp186 contacts alpha-D-galactose. The Proton acceptor role is filled by Asp186. At Ser230 the chain carries Phosphoserine. Position 236 (Tyr236) interacts with alpha-D-galactose.

It belongs to the GHMP kinase family. GalK subfamily. As to quaternary structure, homodimer.

The enzyme catalyses alpha-D-galactose + ATP = alpha-D-galactose 1-phosphate + ADP + H(+). Its pathway is carbohydrate metabolism; galactose metabolism. Functionally, catalyzes the transfer of a phosphate from ATP to alpha-D-galactose and participates in the first committed step in the catabolism of galactose. This is Galactokinase (GALK1) from Canis lupus familiaris (Dog).